Here is an 874-residue protein sequence, read N- to C-terminus: Alanine--tRNA ligase (874 aa).

Zn(2+) is bound by residues H562, H566, C664, and H668.

This sequence belongs to the class-II aminoacyl-tRNA synthetase family. Requires Zn(2+) as cofactor.

The protein resides in the cytoplasm. It catalyses the reaction tRNA(Ala) + L-alanine + ATP = L-alanyl-tRNA(Ala) + AMP + diphosphate. Functionally, catalyzes the attachment of alanine to tRNA(Ala) in a two-step reaction: alanine is first activated by ATP to form Ala-AMP and then transferred to the acceptor end of tRNA(Ala). Also edits incorrectly charged Ser-tRNA(Ala) and Gly-tRNA(Ala) via its editing domain. In Neisseria meningitidis serogroup C / serotype 2a (strain ATCC 700532 / DSM 15464 / FAM18), this protein is Alanine--tRNA ligase.